We begin with the raw amino-acid sequence, 585 residues long: Protein DENND6B (585 aa).

Residues 43-214 form the uDENN domain; sequence ECVCVVTFDL…LPVMGVVVQV (172 aa). The cDENN domain occupies 246–373; that stretch reads VHELDLFRCF…VKLKKPSRLK (128 aa). In terms of domain architecture, dDENN spans 375-499; the sequence is LDTKPGLYTA…KSPHFDGWYR (125 aa).

This sequence belongs to the DENND6 family.

The protein resides in the recycling endosome. Its subcellular location is the cytoplasm. Its function is as follows. Guanine nucleotide exchange factor (GEF) for RAB14. Also has some, lesser GEF activity towards RAB35. This Homo sapiens (Human) protein is Protein DENND6B (DENND6B).